Consider the following 602-residue polypeptide: Myotubularin (602 aa).

Polar residues predominate over residues 1 to 16 (MATSSTPKYNSNSLEN). The interval 1 to 33 (MATSSTPKYNSNSLENSVRRSPGDGINHEQNDE) is disordered. Positions 17-33 (SVRRSPGDGINHEQNDE) are enriched in basic and acidic residues. The GRAM domain maps to 28-96 (HEQNDEISRL…GVIARIEKMG (69 aa)). The Myotubularin phosphatase domain maps to 162–537 (GWAVYDAMTE…RHLELWVNYY (376 aa)). Residues asparagine 287, asparagine 312, and isoleucine 313 each contribute to the a 1,2-diacyl-sn-glycero-3-phospho-(1D-myo-inositol-3,5-bisphosphate) site. Asparagine 287, asparagine 312, and isoleucine 313 together coordinate a 1,2-diacyl-sn-glycero-3-phospho-(1D-myo-inositol-3-phosphate). Cysteine 374 functions as the Phosphocysteine intermediate in the catalytic mechanism. Residues serine 375, aspartate 376, glycine 377, tryptophan 378, aspartate 379, arginine 380, lysine 416, and arginine 420 each contribute to the a 1,2-diacyl-sn-glycero-3-phospho-(1D-myo-inositol-3,5-bisphosphate) site. A 1,2-diacyl-sn-glycero-3-phospho-(1D-myo-inositol-3-phosphate)-binding residues include serine 375, aspartate 376, glycine 377, tryptophan 378, aspartate 379, and arginine 380. Residue arginine 420 coordinates a 1,2-diacyl-sn-glycero-3-phospho-(1D-myo-inositol-3-phosphate). The disordered stretch occupies residues 577–602 (NSPKINRSTTSPSSPSQMMPQVQTPF). The segment covering 584-602 (STTSPSSPSQMMPQVQTPF) has biased composition (low complexity).

This sequence belongs to the protein-tyrosine phosphatase family. Non-receptor class myotubularin subfamily.

Its subcellular location is the cytoplasm. It localises to the cell membrane. It is found in the cell projection. The protein localises to the filopodium. The protein resides in the ruffle. Its subcellular location is the late endosome. It localises to the myofibril. It is found in the sarcomere. It catalyses the reaction a 1,2-diacyl-sn-glycero-3-phospho-(1D-myo-inositol-3-phosphate) + H2O = a 1,2-diacyl-sn-glycero-3-phospho-(1D-myo-inositol) + phosphate. The enzyme catalyses a 1,2-diacyl-sn-glycero-3-phospho-(1D-myo-inositol-3,5-bisphosphate) + H2O = a 1,2-diacyl-sn-glycero-3-phospho-(1D-myo-inositol-5-phosphate) + phosphate. It carries out the reaction 1,2-dioctanoyl-sn-glycero-3-phospho-(1-D-myo-inositol-3-phosphate) + H2O = 1,2-dioctanoyl-sn-glycero-3-phospho-(1D-myo-inositol) + phosphate. The catalysed reaction is 1,2-dioctanoyl-sn-glycero-3-phospho-(1D-myo-inositol-3,5-bisphosphate) + H2O = 1,2-dioctanoyl-sn-glycero-3-phospho-(1D-myo-inositol-5-phosphate) + phosphate. It catalyses the reaction 1,2-dihexadecanoyl-sn-glycero-3-phospho-(1D-myo-inositol-3,5-phosphate) + H2O = 1,2-dihexadecanoyl-sn-glycero-3-phospho-(1D-myo-inositol-5-phosphate) + phosphate. Its function is as follows. Lipid phosphatase which dephosphorylates phosphatidylinositol 3-monophosphate (PI3P) and phosphatidylinositol 3,5-bisphosphate (PI(3,5)P2). In Xenopus laevis (African clawed frog), this protein is Myotubularin (mtm1).